Reading from the N-terminus, the 422-residue chain is Enolase (422 aa).

Gln162 contributes to the (2R)-2-phosphoglycerate binding site. Glu204 functions as the Proton donor in the catalytic mechanism. The Mg(2+) site is built by Asp241, Glu284, and Asp311. 4 residues coordinate (2R)-2-phosphoglycerate: Lys336, Arg365, Ser366, and Lys387. Lys336 (proton acceptor) is an active-site residue.

It belongs to the enolase family. It depends on Mg(2+) as a cofactor.

It is found in the cytoplasm. Its subcellular location is the secreted. The protein resides in the cell surface. It carries out the reaction (2R)-2-phosphoglycerate = phosphoenolpyruvate + H2O. The protein operates within carbohydrate degradation; glycolysis; pyruvate from D-glyceraldehyde 3-phosphate: step 4/5. Catalyzes the reversible conversion of 2-phosphoglycerate (2-PG) into phosphoenolpyruvate (PEP). It is essential for the degradation of carbohydrates via glycolysis. This chain is Enolase, found in Bartonella quintana (strain Toulouse) (Rochalimaea quintana).